Here is a 380-residue protein sequence, read N- to C-terminus: Tryptophan 2,3-dioxygenase (380 aa).

Substrate contacts are provided by residues 57–61 and Arg-128; that span reads FIITH. His-313 provides a ligand contact to heme. Thr-328 provides a ligand contact to substrate.

The protein belongs to the tryptophan 2,3-dioxygenase family. In terms of assembly, homotetramer. Dimer of dimers. Requires heme as cofactor.

The catalysed reaction is L-tryptophan + O2 = N-formyl-L-kynurenine. It participates in amino-acid degradation; L-tryptophan degradation via kynurenine pathway; L-kynurenine from L-tryptophan: step 1/2. It functions in the pathway pigment biosynthesis; ommochrome biosynthesis. Its function is as follows. Heme-dependent dioxygenase that catalyzes the oxidative cleavage of the L-tryptophan (L-Trp) pyrrole ring and converts L-tryptophan to N-formyl-L-kynurenine. Catalyzes the oxidative cleavage of the indole moiety. This is Tryptophan 2,3-dioxygenase from Drosophila persimilis (Fruit fly).